Reading from the N-terminus, the 417-residue chain is Transmembrane protease serine 11G (417 aa).

The Cytoplasmic segment spans residues 1–22 (MYQPGILGRRKRVCKPWTVALT). Residues 23-43 (TTAALLALAVLIGLLVYFLVY) form a helical; Signal-anchor for type II membrane protein membrane-spanning segment. Residues 44 to 417 (EEKTHYYQAS…RNWIKSKTNI (374 aa)) are Extracellular-facing. In terms of domain architecture, SEA spans 46–165 (KTHYYQASFW…PYLREMNAAQ (120 aa)). The Peptidase S1 domain maps to 186–416 (IADGKPAGSN…YRNWIKSKTN (231 aa)). A disulfide bond links cysteine 211 and cysteine 227. Catalysis depends on charge relay system residues histidine 226 and aspartate 271. Cystine bridges form between cysteine 336–cysteine 352 and cysteine 363–cysteine 392. The active-site Charge relay system is the serine 367.

Belongs to the peptidase S1 family. In terms of tissue distribution, highest expression in lung and tongue. Also expressed in brain, colon, heart and liver. Isoform 1 is the predominant form in tongue whereas both isoforms are expressed in similar amounts in lung. At the cellular level, expression is confined to epithelial cells within the cleft of the circumvallate papillae extending into the ducts of the minor salivary glands, the respiratory epithelium of the nasal cavity and tear gland ducts.

The protein resides in the membrane. The polypeptide is Transmembrane protease serine 11G (Tmprss11g) (Rattus norvegicus (Rat)).